The chain runs to 1186 residues: uncharacterized protein (1186 aa).

This is an uncharacterized protein from Acheta domesticus (House cricket).